The chain runs to 271 residues: Type III pantothenate kinase (271 aa).

Residue 5–12 coordinates ATP; the sequence is DISNSVTK. Substrate is bound by residues Tyr85 and 92–95; that span reads GADR. Catalysis depends on Asp94, which acts as the Proton acceptor. K(+) is bound at residue Asp114. Thr117 provides a ligand contact to ATP. Thr169 lines the substrate pocket.

It belongs to the type III pantothenate kinase family. As to quaternary structure, homodimer. NH4(+) is required as a cofactor. K(+) serves as cofactor.

The protein resides in the cytoplasm. The catalysed reaction is (R)-pantothenate + ATP = (R)-4'-phosphopantothenate + ADP + H(+). The protein operates within cofactor biosynthesis; coenzyme A biosynthesis; CoA from (R)-pantothenate: step 1/5. Catalyzes the phosphorylation of pantothenate (Pan), the first step in CoA biosynthesis. The sequence is that of Type III pantothenate kinase from Methylacidiphilum infernorum (isolate V4) (Methylokorus infernorum (strain V4)).